A 335-amino-acid polypeptide reads, in one-letter code: Ketol-acid reductoisomerase (NADP(+)) (335 aa).

Positions 2–182 constitute a KARI N-terminal Rossmann domain; that stretch reads AKIIYDNETT…GATRAGVYET (181 aa). Residues 25-28, arginine 48, serine 51, serine 53, and 83-86 each bind NADP(+); these read YGSQ and DENQ. Histidine 108 is a catalytic residue. Glycine 134 is an NADP(+) binding site. One can recognise a KARI C-terminal knotted domain in the interval 183–328; it reads TFREETETDL…KQIRANIPWL (146 aa). Residues aspartate 191, glutamate 195, glutamate 227, and glutamate 231 each coordinate Mg(2+). Position 252 (serine 252) interacts with substrate.

It belongs to the ketol-acid reductoisomerase family. Requires Mg(2+) as cofactor.

It catalyses the reaction (2R)-2,3-dihydroxy-3-methylbutanoate + NADP(+) = (2S)-2-acetolactate + NADPH + H(+). It carries out the reaction (2R,3R)-2,3-dihydroxy-3-methylpentanoate + NADP(+) = (S)-2-ethyl-2-hydroxy-3-oxobutanoate + NADPH + H(+). It functions in the pathway amino-acid biosynthesis; L-isoleucine biosynthesis; L-isoleucine from 2-oxobutanoate: step 2/4. Its pathway is amino-acid biosynthesis; L-valine biosynthesis; L-valine from pyruvate: step 2/4. Its function is as follows. Involved in the biosynthesis of branched-chain amino acids (BCAA). Catalyzes an alkyl-migration followed by a ketol-acid reduction of (S)-2-acetolactate (S2AL) to yield (R)-2,3-dihydroxy-isovalerate. In the isomerase reaction, S2AL is rearranged via a Mg-dependent methyl migration to produce 3-hydroxy-3-methyl-2-ketobutyrate (HMKB). In the reductase reaction, this 2-ketoacid undergoes a metal-dependent reduction by NADPH to yield (R)-2,3-dihydroxy-isovalerate. The chain is Ketol-acid reductoisomerase (NADP(+)) from Methanosarcina barkeri (strain Fusaro / DSM 804).